The chain runs to 262 residues: Putative ABC transporter ATP-binding protein SAV_3608 (262 aa).

The ABC transporter domain maps to 18–248; sequence LDVAGLAFAY…DTLMRAHRLE (231 aa). 51–58 lines the ATP pocket; sequence GPNGAGKT.

Belongs to the ABC transporter superfamily.

The protein resides in the cell membrane. Functionally, probably part of an ABC transporter complex. Responsible for energy coupling to the transport system. This Streptomyces avermitilis (strain ATCC 31267 / DSM 46492 / JCM 5070 / NBRC 14893 / NCIMB 12804 / NRRL 8165 / MA-4680) protein is Putative ABC transporter ATP-binding protein SAV_3608.